Reading from the N-terminus, the 586-residue chain is Asparagine synthetase [glutamine-hydrolyzing] 2 (586 aa).

Cys-2 acts as the For GATase activity in catalysis. Residues 2-185 form the Glutamine amidotransferase type-2 domain; it reads CGILAVLGCS…PGHLYSSKEK (184 aa). Residues 50 to 54, 75 to 77, and Asp-98 contribute to the L-glutamine site; these read RLAIV and NGE. Residues 193-516 form the Asparagine synthetase domain; the sequence is PPWFSEAIPS…PQNSARLSVP (324 aa). Residues Leu-231, Val-267, and 341–342 each bind ATP; that span reads SG.

It carries out the reaction L-aspartate + L-glutamine + ATP + H2O = L-asparagine + L-glutamate + AMP + diphosphate + H(+). It functions in the pathway amino-acid biosynthesis; L-asparagine biosynthesis; L-asparagine from L-aspartate (L-Gln route): step 1/1. This Lotus japonicus (Lotus corniculatus var. japonicus) protein is Asparagine synthetase [glutamine-hydrolyzing] 2 (AS2).